The sequence spans 623 residues: AFI1-like protein C776.06c (623 aa).

Positions 5 to 204 constitute a uDENN domain; sequence DYLLTAIFDP…IDNIPKPGSE (200 aa). In terms of domain architecture, cDENN spans 248–386; sequence ISNLINTFID…SDATTTMDTK (139 aa). The 89-residue stretch at 388–476 folds into the dDENN domain; it reads LFNNTSPFTP…WSWDNDDEKV (89 aa).

The protein belongs to the AFI1/mesA family.

The protein resides in the cytoplasm. It is found in the cell cortex. It localises to the nucleus. Involved in polarity establishment. The protein is AFI1-like protein C776.06c of Schizosaccharomyces pombe (strain 972 / ATCC 24843) (Fission yeast).